The sequence spans 411 residues: Lysosome-associated membrane glycoprotein 2 (411 aa).

The first 26 residues, 1–26, serve as a signal peptide directing secretion; that stretch reads MRLLSPVTGSKLVLLFLFLGAVRSDA. Positions 27–188 are first lumenal domain; the sequence is LKLNLTDSKG…SKHEQVCKED (162 aa). The Lumenal portion of the chain corresponds to 27–376; sequence LKLNLTDSKG…QDCSADEDNF (350 aa). Cysteines 38 and 75 form a disulfide. N-linked (GlcNAc...) asparagine glycosylation is found at asparagine 46, asparagine 57, asparagine 71, asparagine 97, asparagine 109, asparagine 117, asparagine 175, asparagine 223, asparagine 230, asparagine 243, asparagine 261, asparagine 276, asparagine 308, asparagine 318, and asparagine 357. The cysteines at positions 149 and 185 are disulfide-linked. The interval 189-229 is hinge; sequence KTATTVAPIIHTTVPSPTTTLTPTSIPVPTPTVGNYTISNG. The interval 230-376 is second lumenal domain; the sequence is NATCLLATMG…QDCSADEDNF (147 aa). Cysteine 233 and cysteine 266 are oxidised to a cystine. Cysteine 332 and cysteine 369 are disulfide-bonded. Residues 377–400 form a helical membrane-spanning segment; sequence LVPIAVGAALGGVLILVLLAYFIG. Topologically, residues 401 to 411 are cytoplasmic; sequence LKRHHTGYEQF. An important for binding and subsequent lysosomal degradation of target proteins region spans residues 402–405; the sequence is KRHH.

This sequence belongs to the LAMP family. Monomer. Forms large homooligomers. Interacts (via its cytoplasmic region) with HSPA8; HSPA8 mediates recruitment of proteins with a KFERQ motif to the surface of the lysosome for chaperone-mediated autophagy. Interacts with HSP90 in the lysosome lumen; this enhances LAMP2 stability. Interacts with MLLT11. Interacts with ABCB9. Interacts with FURIN. Interacts with CT55; this interaction may be important for LAMP2 protein stability. Interacts with TMEM175; inhibiting the proton channel activity of TMEM175. Forms a ternary complex with RAB7A and RUFY4 (via RUN domain); the interaction with RAB7A is mediated by RUFY4 (via RUN and coiled coil domains). In terms of processing, extensively N-glycosylated. Contains a minor proportion of O-linked glycans. Contains sialylated glycans. In terms of tissue distribution, detected in liver, kidney, spleen and macrophages (at protein level).

It is found in the lysosome membrane. The protein localises to the endosome membrane. It localises to the cell membrane. Its subcellular location is the cytoplasmic vesicle. The protein resides in the autophagosome membrane. Functionally, lysosomal membrane glycoprotein which plays an important role in lysosome biogenesis, lysosomal pH regulation and autophagy. Acts as an important regulator of lysosomal lumen pH regulation by acting as a direct inhibitor of the proton channel TMEM175, facilitating lysosomal acidification for optimal hydrolase activity. Plays an important role in chaperone-mediated autophagy, a process that mediates lysosomal degradation of proteins in response to various stresses and as part of the normal turnover of proteins with a long biological half-live. Functions by binding target proteins, such as GAPDH, NLRP3 and MLLT11, and targeting them for lysosomal degradation. In the chaperone-mediated autophagy, acts downstream of chaperones, such as HSPA8/HSC70, which recognize and bind substrate proteins and mediate their recruitment to lysosomes, where target proteins bind LAMP2. Plays a role in lysosomal protein degradation in response to starvation. Required for the fusion of autophagosomes with lysosomes during autophagy. Cells that lack LAMP2 express normal levels of VAMP8, but fail to accumulate STX17 on autophagosomes, which is the most likely explanation for the lack of fusion between autophagosomes and lysosomes. Required for normal degradation of the contents of autophagosomes. Required for efficient MHC class II-mediated presentation of exogenous antigens via its function in lysosomal protein degradation; antigenic peptides generated by proteases in the endosomal/lysosomal compartment are captured by nascent MHC II subunits. Is not required for efficient MHC class II-mediated presentation of endogenous antigens. The chain is Lysosome-associated membrane glycoprotein 2 (Lamp2) from Rattus norvegicus (Rat).